The sequence spans 151 residues: UPF0756 membrane protein HS_0993 (151 aa).

4 helical membrane-spanning segments follow: residues Met1–Leu21, Tyr52–Gly72, Ala81–Gly101, and Ile123–Leu143.

This sequence belongs to the UPF0756 family.

It is found in the cell membrane. The sequence is that of UPF0756 membrane protein HS_0993 from Histophilus somni (strain 129Pt) (Haemophilus somnus).